The chain runs to 515 residues: N-acetylglucosamine-1-phosphodiester alpha-N-acetylglucosaminidase (515 aa).

The signal sequence occupies residues 1 to 25; it reads MATSTGRWLLLRLALFGFLWEASGG. Residues 26-49 constitute a propeptide, removed in mature form; it reads LDSGASRDDDLLLPYPRARARLPR. The Lumenal portion of the chain corresponds to 50–448; it reads DCTRVRAGNR…AGELSFFTRT (399 aa). Intrachain disulfides connect C115–C148, C132–C323, C307–C314, C362–C373, and C380–C389. 3 N-linked (GlcNAc...) asparagine glycosylation sites follow: N208, N214, and N296. Positions 358-390 constitute an EGF-like domain; sequence DELDCGPSNCSQHGLCTETGCRCDAGWTGSNCS. Residues N366, N388, and N420 are each glycosylated (N-linked (GlcNAc...) asparagine). A helical transmembrane segment spans residues 449–469; the sequence is AWLALTLALAFLLLISTAANL. Residues 470–515 are Cytoplasmic-facing; that stretch reads SLLLSRAERNRRLHGDYAYHPLQEMNGEPLAAEKEQPGGAHNPFKD. The tract at residues 486–493 is mediates the interaction with AP4M1; that stretch reads YAYHPLQE. Residues 488-491 carry the Tyrosine-based internalization motif motif; it reads YHPL. Residues 511–515 carry the NPF internalization motif motif; it reads NPFKD.

As to quaternary structure, homotetramer arranged as two disulfide-linked homodimers. Interacts with AP4M1. In terms of processing, the precursor is cleaved and activated in the trans-Golgi network by a furin endopeptidase. As to expression, isoform 2 may be brain-specific.

It localises to the golgi apparatus. Its subcellular location is the golgi stack membrane. It is found in the trans-Golgi network. It carries out the reaction N(4)-[6-(N-acetyl-alpha-D-glucosaminyl-1-phospho)-alpha-D-mannosyl-(1-&gt;2)-alpha-D-mannosyl-(glycan)]-L-asparaginyl-[protein] + H2O = N(4)-[6-phospho-alpha-D-mannosyl-(1-&gt;2)-alpha-D-mannosyl-(glycan)]-L-asparaginyl-[protein] + N-acetyl-D-glucosamine + H(+). Its pathway is protein modification; protein glycosylation. Functionally, catalyzes the second step in the formation of the mannose 6-phosphate targeting signal on lysosomal enzyme oligosaccharides by removing GlcNAc residues from GlcNAc-alpha-P-mannose moieties, which are formed in the first step. Also hydrolyzes UDP-GlcNAc, a sugar donor for Golgi N-acetylglucosaminyltransferases. This chain is N-acetylglucosamine-1-phosphodiester alpha-N-acetylglucosaminidase (NAGPA), found in Homo sapiens (Human).